Reading from the N-terminus, the 184-residue chain is ATP synthase subunit delta (184 aa).

It belongs to the ATPase delta chain family. In terms of assembly, F-type ATPases have 2 components, F(1) - the catalytic core - and F(0) - the membrane proton channel. F(1) has five subunits: alpha(3), beta(3), gamma(1), delta(1), epsilon(1). F(0) has three main subunits: a(1), b(2) and c(10-14). The alpha and beta chains form an alternating ring which encloses part of the gamma chain. F(1) is attached to F(0) by a central stalk formed by the gamma and epsilon chains, while a peripheral stalk is formed by the delta and b chains.

It is found in the cell inner membrane. F(1)F(0) ATP synthase produces ATP from ADP in the presence of a proton or sodium gradient. F-type ATPases consist of two structural domains, F(1) containing the extramembraneous catalytic core and F(0) containing the membrane proton channel, linked together by a central stalk and a peripheral stalk. During catalysis, ATP synthesis in the catalytic domain of F(1) is coupled via a rotary mechanism of the central stalk subunits to proton translocation. Functionally, this protein is part of the stalk that links CF(0) to CF(1). It either transmits conformational changes from CF(0) to CF(1) or is implicated in proton conduction. This chain is ATP synthase subunit delta, found in Zymomonas mobilis subsp. mobilis (strain ATCC 31821 / ZM4 / CP4).